A 65-amino-acid chain; its full sequence is Ferredoxin soy (65 aa).

The 4Fe-4S ferredoxin-type domain occupies 2–29 (GVQVDKERCVGAGMCALTAPDVFTQDDD). [3Fe-4S] cluster is bound by residues C10, C16, and C55.

[3Fe-4S] cluster serves as cofactor.

In terms of biological role, electron transport protein for the cytochrome P-450-SOY system. The polypeptide is Ferredoxin soy (soyB) (Streptomyces griseus).